Reading from the N-terminus, the 225-residue chain is MAPRPLHELVEAGWAKALDPVAGRIAAMGDFLRAEVAAGRTYLPAGANVLRAFQQPFDDVRVLIVGQDPYPTPGMAIGLSFAVSPEVRSLPGSLENIFRELHTDLGLPRPSNGDLTPWTEQGVLLLNRALTTAPRKPAAHRGKGWEEVTEQAIRALVARGTPLVSVLWGRDARNLRPLLGDLPAIESAHPSPMSADRGFFGSRPFSRANELLVRQGAQPVDWRLP.

The active-site Proton acceptor is the aspartate 68.

This sequence belongs to the uracil-DNA glycosylase (UDG) superfamily. UNG family.

It is found in the cytoplasm. It carries out the reaction Hydrolyzes single-stranded DNA or mismatched double-stranded DNA and polynucleotides, releasing free uracil.. In terms of biological role, excises uracil residues from the DNA which can arise as a result of misincorporation of dUMP residues by DNA polymerase or due to deamination of cytosine. This is Uracil-DNA glycosylase 1 (ung1) from Streptomyces avermitilis (strain ATCC 31267 / DSM 46492 / JCM 5070 / NBRC 14893 / NCIMB 12804 / NRRL 8165 / MA-4680).